The sequence spans 796 residues: Fibroblast growth factor receptor 3 (796 aa).

The N-terminal stretch at 1–19 (MLVWLCGLCLVTLAGGRSA) is a signal peptide. Residues 20-358 (ARLPLTEGRP…AEPVPDVDTS (339 aa)) are Extracellular-facing. An Ig-like C2-type 1 domain is found at 21–119 (RLPLTEGRPT…VLRNVTVRVT (99 aa)). Cys56 and Cys102 are oxidised to a cystine. Residues Asn91 and Asn113 are each glycosylated (N-linked (GlcNAc...) asparagine). The disordered stretch occupies residues 117 to 142 (RVTDSPSSGDDEDDDEESESANAPKF). A compositionally biased stretch (acidic residues) spans 125-135 (GDDEDDDEESE). Ig-like C2-type domains follow at residues 140–233 (PKFT…YTLD) and 239–344 (PHRP…AWLT). Cys165 and Cys217 form a disulfide bridge. Residues Asn214, Asn251, Asn283, Asn304, and Asn317 are each glycosylated (N-linked (GlcNAc...) asparagine). Cys264 and Cys328 are disulfide-bonded. A helical membrane pass occupies residues 359–379 (VSILAAAGCVAVVILVVIIIF). Residues 380-796 (TYKMKMPSKK…HQQYNGVIRT (417 aa)) are Cytoplasmic-facing. The 290-residue stretch at 457–746 (LTLGKPLGEG…LTVTSTDEYL (290 aa)) folds into the Protein kinase domain. ATP-binding positions include 463–471 (LGEGCFGQV) and Lys493. Asp602 acts as the Proton acceptor in catalysis. Tyr632, Tyr633, Tyr709, and Tyr745 each carry phosphotyrosine; by autocatalysis.

The protein belongs to the protein kinase superfamily. Tyr protein kinase family. Fibroblast growth factor receptor subfamily. As to quaternary structure, monomer. Homodimer after ligand binding. Autophosphorylated. Binding of FGF family members together with heparan sulfate proteoglycan or heparin promotes receptor dimerization and autophosphorylation on tyrosine residues. Autophosphorylation occurs in trans between the two FGFR molecules present in the dimer. As to expression, undetectable in the adult skeletal muscle. Low levels of expression were detected in the liver, lung and kidney. Medium levels of expression were detected in the heart, spleen, intestine and eye. Highest expression is observed in the testis.

Its subcellular location is the cell membrane. It carries out the reaction L-tyrosyl-[protein] + ATP = O-phospho-L-tyrosyl-[protein] + ADP + H(+). With respect to regulation, present in an inactive conformation in the absence of bound ligand. Ligand binding leads to dimerization and activation by autophosphorylation on tyrosine residues. Tyrosine-protein kinase that acts as a cell-surface receptor for fibroblast growth factors and plays an essential role in the regulation of cell proliferation, differentiation and apoptosis. Plays an essential role in the regulation of chondrocyte differentiation, proliferation and apoptosis, and is required for normal skeleton development. Regulates both osteogenesis and postnatal bone mineralization by osteoblasts. Promotes apoptosis in chondrocytes, but can also promote cancer cell proliferation. Phosphorylates PLCG1, CBL and FRS2. Ligand binding leads to the activation of several signaling cascades. Activation of PLCG1 leads to the production of the cellular signaling molecules diacylglycerol and inositol 1,4,5-trisphosphate. Phosphorylation of FRS2 triggers recruitment of GRB2, GAB1, PIK3R1 and SOS1, and mediates activation of RAS, MAPK1/ERK2, MAPK3/ERK1 and the MAP kinase signaling pathway, as well as of the AKT1 signaling pathway. This chain is Fibroblast growth factor receptor 3 (FGFR3), found in Pleurodeles waltl (Iberian ribbed newt).